We begin with the raw amino-acid sequence, 299 residues long: GTPase Era (299 aa).

Positions 9–177 (RSGSVAVIGR…VGDLLKLVPE (169 aa)) constitute an Era-type G domain. The segment at 17-24 (GRPNVGKS) is G1. 17–24 (GRPNVGKS) is a binding site for GTP. The tract at residues 43–47 (QTTRH) is G2. Residues 64–67 (DTPG) are G3. Residues 64–68 (DTPGL) and 126–129 (NKVD) each bind GTP. A G4 region spans residues 126 to 129 (NKVD). Positions 156–158 (VSA) are G5. Residues 200 to 284 (VREQLMRQLG…FLETWVRVRE (85 aa)) enclose the KH type-2 domain.

It belongs to the TRAFAC class TrmE-Era-EngA-EngB-Septin-like GTPase superfamily. Era GTPase family. As to quaternary structure, monomer.

The protein resides in the cytoplasm. Its subcellular location is the cell inner membrane. In terms of biological role, an essential GTPase that binds both GDP and GTP, with rapid nucleotide exchange. Plays a role in 16S rRNA processing and 30S ribosomal subunit biogenesis and possibly also in cell cycle regulation and energy metabolism. The chain is GTPase Era from Xanthomonas axonopodis pv. citri (strain 306).